We begin with the raw amino-acid sequence, 652 residues long: Na(+)/H(+) antiporter NhaA 1 (652 aa).

The tract at residues 1 to 427 (MTGELPRGRR…VGASLTTWLV (427 aa)) is na(+)/H(+) antiporter NhaA. The next 11 membrane-spanning stretches (helical) occupy residues 27–47 (AFLH…VVAL), 78–98 (LRYW…GLEV), 114–134 (TLPL…YLAF), 142–162 (VGWG…LAVL), 173–193 (FLLT…AIAY), 200–220 (TALF…AAGG), 227–247 (LLLG…PVVV), 312–332 (LIVP…ELLA), 343–363 (VLFA…MLVA), 376–396 (WAAI…ALLI), and 411–431 (IGIL…FRLA). The 196-residue stretch at 428–623 (FRLAARLPPA…LSAAVTSAFA (196 aa)) folds into the Thioredoxin domain. A disordered region spans residues 626–652 (RLRPRDDREPDRRREVGSEQPDEEPGT). Residues 628–642 (RPRDDREPDRRREVG) are compositionally biased toward basic and acidic residues.

In the N-terminal section; belongs to the NhaA Na(+)/H(+) (TC 2.A.33) antiporter family.

The protein resides in the cell membrane. The catalysed reaction is Na(+)(in) + 2 H(+)(out) = Na(+)(out) + 2 H(+)(in). In terms of biological role, na(+)/H(+) antiporter that extrudes sodium in exchange for external protons. The polypeptide is Na(+)/H(+) antiporter NhaA 1 (Salinispora arenicola (strain CNS-205)).